The following is a 562-amino-acid chain: Putative transport protein ECA2683 (562 aa).

Transmembrane regions (helical) follow at residues 8 to 28 (LLNG…LCLG), 32 to 52 (LGPV…LLGQ), 66 to 86 (FMLF…SIFF), 93 to 113 (FMLA…LGKL), 116 to 136 (WGIG…PVLV), and 158 to 178 (HLSL…IFGA). RCK C-terminal domains lie at 202–288 (LDVD…NFRD) and 290–373 (KEVF…RIGF). 5 helical membrane-spanning segments follow: residues 383–403 (LLAF…TIQF), 406–426 (FTFG…LGFL), 447–467 (FGLM…INSS), 478–498 (SGLI…AYVL), and 537–557 (GTYA…VVIW).

It belongs to the AAE transporter (TC 2.A.81) family. YbjL subfamily.

It localises to the cell membrane. The chain is Putative transport protein ECA2683 from Pectobacterium atrosepticum (strain SCRI 1043 / ATCC BAA-672) (Erwinia carotovora subsp. atroseptica).